The following is a 110-amino-acid chain: Large ribosomal subunit protein P1 (110 aa).

Position 2 is a blocked amino end (Ala) (Ala2). The segment covering 69 to 83 (AAPAAGGAAAATEAP) has biased composition (low complexity). The segment at 69-110 (AAPAAGGAAAATEAPAAKEEKKEEKKEESEEEDEDMGFGLFD) is disordered. The segment covering 84 to 96 (AAKEEKKEEKKEE) has biased composition (basic and acidic residues). A Phosphoserine; in form eL12'-P modification is found at Ser97.

As to quaternary structure, part of the ribosomal stalk of the large ribosomal subunit; P1 and P2 exist as dimers which assemble on the P0 scaffold. In terms of processing, phosphorylation of Ser-97 converts eL12' to eL12'-P.

Its function is as follows. Plays an important role in the elongation step of protein synthesis. The chain is Large ribosomal subunit protein P1 from Artemia salina (Brine shrimp).